The chain runs to 1767 residues: E3 ubiquitin-protein ligase listerin (1767 aa).

7 HEAT repeats span residues 59–96, 100–138, 273–314, 335–372, 380–418, 433–473, and 509–547; these read SLVDSDFRMVLRKLSKKDVTTKLKAMQEFGIMCTERDT, KGVLPYWPRIFCKISLDHDRRVREATQQAFEKLILKVKK, SAYF…VVCP, NAKKSVFPKLMAMIREGGRGLAAVMYPYLLPFISKLPQ, DFFKNFLTSLVTGLSTERTKSSSSECSAVISAFFECLRF, LINE…KADA, and VKSVLCVSSLVGVLQRPRSSLKLHRKKTAQVRFAINIPE. Residues 550-583 form a disordered region; that stretch reads KGDEKSMSSEGENSEGSDGGAQSPLSNTSSDLVS. A compositionally biased stretch (polar residues) spans 572–581; it reads SPLSNTSSDL. HEAT repeat units follow at residues 621 to 658, 676 to 714, 1067 to 1104, 1183 to 1226, 1315 to 1353, 1378 to 1415, and 1476 to 1513; these read LDSFSSVQVFNILLSDKQKNVVKAKPLEITKLAEKNPA, EDGGFLVDILYSALRCCDSGVERKEVLDDLTKEDLKWSS, SETSSLLQLLFDRSRKNGTLWSLIIAKLILSRSISSDE, QLLH…IMRF, GIHSLLLPLLVNAIGENKDLSETSFQNAMLKPMCETLTY, EHLQTLLNTLTPLLLFRARPVQIAAYHMLCKLMPELPQ, and LGYLLTWKLILTFFKAASSQLRALYSMYLRKTKSLNKL. The RING-type zinc finger occupies 1716 to 1763; sequence CMICFSVIHGFNYSLPKKACRTCKKKFHSACLYKWFTSSNKSTCPLCR.

This sequence belongs to the LTN1 family. As to quaternary structure, component of the ribosome quality control complex (RQC), composed of at least the E3 ubiquitin ligase LTN1 and NEMF associated with the 60S ribosomal subunit. The complex probably also contains TCF25 as well as VCP/p97 and its ubiquitin-binding cofactors. Post-translationally, autoubiquitinated. Widely expressed, including in the brain and spinal cord.

It is found in the cytoplasm. The protein resides in the cytosol. It catalyses the reaction S-ubiquitinyl-[E2 ubiquitin-conjugating enzyme]-L-cysteine + [acceptor protein]-L-lysine = [E2 ubiquitin-conjugating enzyme]-L-cysteine + N(6)-ubiquitinyl-[acceptor protein]-L-lysine.. It participates in protein modification; protein ubiquitination. Functionally, E3 ubiquitin-protein ligase. component of the ribosome quality control complex (RQC), a ribosome-associated complex that mediates ubiquitination and extraction of incompletely synthesized nascent chains for proteasomal degradation. Within the RQC complex, LTN1 is recruited to stalled 60S ribosomal subunits by NEMF and mediates ubiquitination of stalled nascent chains. Ubiquitination leads to VCP/p97 recruitment for extraction and degradation of the incomplete translation product. In Mus musculus (Mouse), this protein is E3 ubiquitin-protein ligase listerin (Ltn1).